Reading from the N-terminus, the 282-residue chain is Large ribosomal subunit protein uL2 (282 aa).

The tract at residues 215–282 is disordered; sequence RHKGIRPTVR…IIRSRKETKK (68 aa). Basic residues predominate over residues 263–282; sequence RNPKKPSTKLIIRSRKETKK.

This sequence belongs to the universal ribosomal protein uL2 family. Part of the 50S ribosomal subunit. Forms a bridge to the 30S subunit in the 70S ribosome.

In terms of biological role, one of the primary rRNA binding proteins. Required for association of the 30S and 50S subunits to form the 70S ribosome, for tRNA binding and peptide bond formation. It has been suggested to have peptidyltransferase activity; this is somewhat controversial. Makes several contacts with the 16S rRNA in the 70S ribosome. This chain is Large ribosomal subunit protein uL2, found in Mesomycoplasma hyopneumoniae (strain J / ATCC 25934 / NCTC 10110) (Mycoplasma hyopneumoniae).